A 334-amino-acid chain; its full sequence is Beta-hexosaminidase (334 aa).

Residues D60, R68, R133, and 163–164 (KH) each bind substrate. The Proton donor/acceptor role is filled by H176. D247 functions as the Nucleophile in the catalytic mechanism.

The protein belongs to the glycosyl hydrolase 3 family. NagZ subfamily.

It localises to the cytoplasm. It carries out the reaction Hydrolysis of terminal non-reducing N-acetyl-D-hexosamine residues in N-acetyl-beta-D-hexosaminides.. Its pathway is cell wall biogenesis; peptidoglycan recycling. Plays a role in peptidoglycan recycling by cleaving the terminal beta-1,4-linked N-acetylglucosamine (GlcNAc) from peptide-linked peptidoglycan fragments, giving rise to free GlcNAc, anhydro-N-acetylmuramic acid and anhydro-N-acetylmuramic acid-linked peptides. The polypeptide is Beta-hexosaminidase (Xanthomonas oryzae pv. oryzae (strain KACC10331 / KXO85)).